The primary structure comprises 89 residues: Small ribosomal subunit protein uS15 (89 aa).

This sequence belongs to the universal ribosomal protein uS15 family. In terms of assembly, part of the 30S ribosomal subunit. Forms a bridge to the 50S subunit in the 70S ribosome, contacting the 23S rRNA.

Its function is as follows. One of the primary rRNA binding proteins, it binds directly to 16S rRNA where it helps nucleate assembly of the platform of the 30S subunit by binding and bridging several RNA helices of the 16S rRNA. In terms of biological role, forms an intersubunit bridge (bridge B4) with the 23S rRNA of the 50S subunit in the ribosome. This chain is Small ribosomal subunit protein uS15, found in Chlamydia pneumoniae (Chlamydophila pneumoniae).